Reading from the N-terminus, the 526-residue chain is Glucose-6-phosphate isomerase (526 aa).

Catalysis depends on Glu343, which acts as the Proton donor. Active-site residues include His374 and Lys494.

Belongs to the GPI family.

Its subcellular location is the cytoplasm. The enzyme catalyses alpha-D-glucose 6-phosphate = beta-D-fructose 6-phosphate. The protein operates within carbohydrate biosynthesis; gluconeogenesis. It participates in carbohydrate degradation; glycolysis; D-glyceraldehyde 3-phosphate and glycerone phosphate from D-glucose: step 2/4. Functionally, catalyzes the reversible isomerization of glucose-6-phosphate to fructose-6-phosphate. The sequence is that of Glucose-6-phosphate isomerase from Dechloromonas aromatica (strain RCB).